We begin with the raw amino-acid sequence, 148 residues long: uncharacterized protein (148 aa).

The chain crosses the membrane as a helical span at residues 1 to 21 (MLQNYAIVLGMAVAVAIWYFF). Residues 27-61 (APPGPNPPKPDPPKPDPPKMHMPKKKPHWMDPHLT) form a disordered region.

The protein localises to the host membrane. This is an uncharacterized protein from Frog virus 3 (isolate Goorha) (FV-3).